Here is a 426-residue protein sequence, read N- to C-terminus: UDP-N-acetylglucosamine 1-carboxyvinyltransferase (426 aa).

23–24 (KN) serves as a coordination point for phosphoenolpyruvate. Residue arginine 99 coordinates UDP-N-acetyl-alpha-D-glucosamine. The Proton donor role is filled by aspartate 123. Residues aspartate 311 and isoleucine 333 each coordinate UDP-N-acetyl-alpha-D-glucosamine.

This sequence belongs to the EPSP synthase family. MurA subfamily.

The protein localises to the cytoplasm. The enzyme catalyses phosphoenolpyruvate + UDP-N-acetyl-alpha-D-glucosamine = UDP-N-acetyl-3-O-(1-carboxyvinyl)-alpha-D-glucosamine + phosphate. The protein operates within cell wall biogenesis; peptidoglycan biosynthesis. Functionally, cell wall formation. Adds enolpyruvyl to UDP-N-acetylglucosamine. The polypeptide is UDP-N-acetylglucosamine 1-carboxyvinyltransferase (Nocardia farcinica (strain IFM 10152)).